Consider the following 1492-residue polypeptide: Copper-transporting ATPase 1 (1492 aa).

The Cytoplasmic portion of the chain corresponds to 1–645 (MEPNMDANSI…KREIKQWRGS (645 aa)). 2 HMA domains span residues 8–74 (NSIT…FDAL) and 85–151 (TNTV…LDMG). The Cu(+) site is built by threonine 18, cysteine 19, and cysteine 22. Phosphothreonine is present on threonine 152. Residues 171–237 (VLLKMRVEGM…QIEAVGFPAF (67 aa)) enclose the HMA 3 domain. Cysteine 182 and cysteine 185 together coordinate Cu(+). Position 270 is a phosphoserine (serine 270). The HMA 4 domain maps to 277-343 (SAITFTIDGM…AIEAVSPGQY (67 aa)). Cu(+) is bound by residues cysteine 288 and cysteine 291. Threonine 327 is subject to Phosphothreonine. A phosphoserine mark is found at serine 339, serine 353, serine 357, and serine 362. 3 HMA domains span residues 377–443 (QEVV…FDAV), 480–546 (NKCY…FGAV), and 556–622 (GILE…FEAS). Positions 388, 391, 491, 494, 567, and 570 each coordinate Cu(+). Residues 646–667 (FLVSLFFCIPVMGLMIYMMVMD) traverse the membrane as a helical segment. At 668-706 (HHLATLNHNQNMSNEEMINMHSSMFLERQILPGLSIMNL) the chain is on the extracellular side. Asparagine 678 is a glycosylation site (N-linked (GlcNAc...) asparagine). The helical transmembrane segment at 707-726 (LSLLLCLPVQFCGGWYFYIQ) threads the bilayer. The Cytoplasmic portion of the chain corresponds to 727-733 (AYKALRH). The chain crosses the membrane as a helical span at residues 734–754 (KTANMDVLIVLATTIAFAYSL). The Extracellular portion of the chain corresponds to 755–773 (VILLVAMYERAKVNPITFF). A helical membrane pass occupies residues 774–794 (DTPPMLFVFIALGRWLEHIAK). The Cytoplasmic segment spans residues 795 to 927 (GKTSEALAKL…SKAPIQQFAD (133 aa)). The chain crosses the membrane as a helical span at residues 928–951 (KLSGYFVPFIVLVSIVTLLVWIII). The Extracellular portion of the chain corresponds to 952-981 (GFQNFEIVEAYFPGYNRSISRTETIIRFAF). Residues 982–1003 (QASITVLCIACPCSLGLATPTA) traverse the membrane as a helical segment. At 1004 to 1348 (VMVGTGVGAQ…LSRKTVKRIR (345 aa)) the chain is on the cytoplasmic side. The 4-aspartylphosphate intermediate role is filled by aspartate 1036. Glutamate 1073 contributes to the ATP binding site. At threonine 1204 the chain carries Phosphothreonine. Mg(2+)-binding residues include aspartate 1293 and aspartate 1297. A helical transmembrane segment spans residues 1349-1366 (INFVFALIYNLIGIPIAA). The Extracellular portion of the chain corresponds to 1367 to 1377 (GVFLPIGLVLQ). A helical membrane pass occupies residues 1378–1397 (PWMGSAAMAASSVSVVLSSL). At 1398 to 1492 (FLKLYRKPTY…DFREDDDTTL (95 aa)) the chain is on the cytoplasmic side. Serine 1422, serine 1424, serine 1452, serine 1455, and serine 1458 each carry phosphoserine. Positions 1459–1460 (LL) match the Endocytosis signal motif. 4 positions are modified to phosphoserine: serine 1461, serine 1465, serine 1468, and serine 1478. Residues 1478–1492 (SLLVGDFREDDDTTL) form a PDZD11-binding region. The Endocytosis signal signature appears at 1479–1480 (LL).

This sequence belongs to the cation transport ATPase (P-type) (TC 3.A.3) family. Type IB subfamily. Monomer. Interacts with PDZD11. Interacts with ATOX1 and COMMD1. Interacts with TYRP1. Directly interacts with SOD3; this interaction is copper-dependent and is required for SOD3 activity. As to expression, expressed in hippocampal neuron (at protein level). Expressed in anterior pituitary gland (at protein level).

It is found in the golgi apparatus. Its subcellular location is the trans-Golgi network membrane. The protein localises to the cell membrane. The protein resides in the melanosome membrane. It localises to the early endosome membrane. It is found in the cell projection. Its subcellular location is the axon. The protein localises to the dendrite. The protein resides in the postsynaptic density. It catalyses the reaction Cu(+)(in) + ATP + H2O = Cu(+)(out) + ADP + phosphate + H(+). Functionally, ATP-driven copper (Cu(+)) ion pump that plays an important role in intracellular copper ion homeostasis. Within a catalytic cycle, acquires Cu(+) ion from donor protein on the cytoplasmic side of the membrane and delivers it to acceptor protein on the lumenal side. The transfer of Cu(+) ion across the membrane is coupled to ATP hydrolysis and is associated with a transient phosphorylation that shifts the pump conformation from inward-facing to outward-facing state. Under physiological conditions, at low cytosolic copper concentration, it is localized at the trans-Golgi network (TGN) where it transfers Cu(+) ions to cuproenzymes of the secretory pathway. Upon elevated cytosolic copper concentrations, it relocalizes to the plasma membrane where it is responsible for the export of excess Cu(+) ions. May play a dual role in neuron function and survival by regulating cooper efflux and neuronal transmission at the synapse as well as by supplying Cu(+) ions to enzymes such as PAM, TYR and SOD3. In the melanosomes of pigmented cells, provides copper cofactor to TYR to form an active TYR holoenzyme for melanin biosynthesis. The protein is Copper-transporting ATPase 1 of Rattus norvegicus (Rat).